Here is a 789-residue protein sequence, read N- to C-terminus: Phenylalanine--tRNA ligase beta subunit (789 aa).

One can recognise a tRNA-binding domain in the interval 38 to 151; sequence KKHLQSFVVV…NTYNVGESFF (114 aa). The B5 domain occupies 398–474; that stretch reads HNDILLNFSP…RLYGYDKILE (77 aa). The Mg(2+) site is built by aspartate 452, aspartate 458, glutamate 461, and glutamate 462. The region spanning 694–787 is the FDX-ACB domain; the sequence is LRYQSVKRDF…ISKGFNGILR (94 aa).

This sequence belongs to the phenylalanyl-tRNA synthetase beta subunit family. Type 1 subfamily. As to quaternary structure, tetramer of two alpha and two beta subunits. It depends on Mg(2+) as a cofactor.

It localises to the cytoplasm. The catalysed reaction is tRNA(Phe) + L-phenylalanine + ATP = L-phenylalanyl-tRNA(Phe) + AMP + diphosphate + H(+). The polypeptide is Phenylalanine--tRNA ligase beta subunit (Ehrlichia ruminantium (strain Welgevonden)).